The primary structure comprises 253 residues: 5'/3'-nucleotidase SurE (253 aa).

The a divalent metal cation site is built by Asp8, Asp9, Ser39, and Asn92.

It belongs to the SurE nucleotidase family. A divalent metal cation is required as a cofactor.

The protein resides in the cytoplasm. The enzyme catalyses a ribonucleoside 5'-phosphate + H2O = a ribonucleoside + phosphate. It carries out the reaction a ribonucleoside 3'-phosphate + H2O = a ribonucleoside + phosphate. The catalysed reaction is [phosphate](n) + H2O = [phosphate](n-1) + phosphate + H(+). In terms of biological role, nucleotidase with a broad substrate specificity as it can dephosphorylate various ribo- and deoxyribonucleoside 5'-monophosphates and ribonucleoside 3'-monophosphates with highest affinity to 3'-AMP. Also hydrolyzes polyphosphate (exopolyphosphatase activity) with the preference for short-chain-length substrates (P20-25). Might be involved in the regulation of dNTP and NTP pools, and in the turnover of 3'-mononucleotides produced by numerous intracellular RNases (T1, T2, and F) during the degradation of various RNAs. The protein is 5'/3'-nucleotidase SurE of Klebsiella pneumoniae (strain 342).